A 547-amino-acid chain; its full sequence is Chaperonin GroEL (547 aa).

ATP contacts are provided by residues 30 to 33 (TLGP), K51, 87 to 91 (DGTTT), G415, and D496. Residues 528–547 (KEEPMPMRGSGMGGMGGMDF) form a disordered region. Gly residues predominate over residues 537–547 (SGMGGMGGMDF).

It belongs to the chaperonin (HSP60) family. As to quaternary structure, forms a cylinder of 14 subunits composed of two heptameric rings stacked back-to-back. Interacts with the co-chaperonin GroES.

It localises to the cytoplasm. It carries out the reaction ATP + H2O + a folded polypeptide = ADP + phosphate + an unfolded polypeptide.. Together with its co-chaperonin GroES, plays an essential role in assisting protein folding. The GroEL-GroES system forms a nano-cage that allows encapsulation of the non-native substrate proteins and provides a physical environment optimized to promote and accelerate protein folding. The chain is Chaperonin GroEL from Rickettsia canadensis (strain McKiel).